The sequence spans 99 residues: UPF0213 protein PC1_0597 (99 aa).

Residues Pro-8–Arg-83 enclose the GIY-YIG domain.

Belongs to the UPF0213 family.

This chain is UPF0213 protein PC1_0597, found in Pectobacterium carotovorum subsp. carotovorum (strain PC1).